The chain runs to 300 residues: Heme A synthase (300 aa).

Residues Met1–Lys8 are Cytoplasmic-facing. A helical transmembrane segment spans residues Trp9–Thr29. The Extracellular portion of the chain corresponds to Lys30–Arg64. A disulfide bond links Cys37 and Cys44. Glu60 is a catalytic residue. His63 is a binding site for heme o. A helical transmembrane segment spans residues Gly65–Ile85. The Cytoplasmic segment spans residues Gly86–Lys92. Residues Phe93–Val113 traverse the membrane as a helical segment. Over Met114–Ala123 the chain is Extracellular. A helical transmembrane segment spans residues Leu124–Phe144. His125 contacts heme o. Topologically, residues Glu145–Arg163 are cytoplasmic. The chain crosses the membrane as a helical span at residues His164 to His184. The Extracellular segment spans residues Glu185–Thr218. Cys191 and Cys197 are oxidised to a cystine. His216 serves as a coordination point for heme b. Residues Leu219 to Ala239 form a helical membrane-spanning segment. The Cytoplasmic portion of the chain corresponds to Gln240–Met249. Residues Ile250–Val270 form a helical membrane-spanning segment. At Asn271–Ala275 the chain is on the extracellular side. A helical membrane pass occupies residues Leu276–Ile296. His278 provides a ligand contact to heme b. The Cytoplasmic portion of the chain corresponds to Ser297 to Lys300.

The protein belongs to the COX15/CtaA family. Type 1 subfamily. Interacts with CtaB. It depends on heme b as a cofactor.

The protein resides in the cell membrane. It catalyses the reaction Fe(II)-heme o + 2 A + H2O = Fe(II)-heme a + 2 AH2. It functions in the pathway porphyrin-containing compound metabolism; heme A biosynthesis; heme A from heme O: step 1/1. Its function is as follows. Catalyzes the conversion of heme O to heme A by two successive hydroxylations of the methyl group at C8. The first hydroxylation forms heme I, the second hydroxylation results in an unstable dihydroxymethyl group, which spontaneously dehydrates, resulting in the formyl group of heme A. In Macrococcus caseolyticus (strain JCSC5402) (Macrococcoides caseolyticum), this protein is Heme A synthase.